Here is a 284-residue protein sequence, read N- to C-terminus: Homeobox protein six1b (284 aa).

The segment at residues 124 to 183 (GEETSYCFKEKSRGVLREWYTHNPYPSPREKRELAEATGLTTTQVSNWFKNRRQRDRAAE) is a DNA-binding region (homeobox). Residues 167 to 238 (QVSNWFKNRR…NSVLLLQGNM (72 aa)) are disordered. The span at 179-190 (DRAAEAKERENS) shows a compositional bias: basic and acidic residues. Composition is skewed to polar residues over residues 191–204 (ENNNTGANKQNQLS) and 226–238 (PDQNSVLLLQGNM).

This sequence belongs to the SIX/Sine oculis homeobox family. Interacts with eya1.

It is found in the nucleus. Its subcellular location is the cytoplasm. In terms of biological role, transcription factor that is involved in the regulation of cell proliferation, apoptosis and embryonic development. Depending on context, functions as a transcriptional repressor or activator. Transcriptional activation is enhanced by eya1 (in vitro). Plays an important role in the development of the inner ear, where it promotes hair cell proliferation and inhibits proliferation of neural progenitor cells. Required for normal myogenesis. Plays a role in the development of fast muscle fibers throughout the body, as well as the development of craniofacial muscles. Required for normal expression of myod1 and myog during myogenesis. This is Homeobox protein six1b (six1b) from Danio rerio (Zebrafish).